The primary structure comprises 339 residues: Ketol-acid reductoisomerase (NADP(+)) (339 aa).

The 182-residue stretch at 1–182 (MRVYYDRDAD…GGGRAGIIET (182 aa)) folds into the KARI N-terminal Rossmann domain. NADP(+)-binding positions include 24–27 (YGSQ), Arg48, Ser51, Ser53, and 83–86 (DELQ). Residue His108 is part of the active site. Residue Gly134 participates in NADP(+) binding. Positions 183–328 (TFKEECETDL…ERLRGMMPWI (146 aa)) constitute a KARI C-terminal knotted domain. 4 residues coordinate Mg(2+): Asp191, Glu195, Glu227, and Glu231. Ser252 contacts substrate.

This sequence belongs to the ketol-acid reductoisomerase family. Mg(2+) is required as a cofactor.

It catalyses the reaction (2R)-2,3-dihydroxy-3-methylbutanoate + NADP(+) = (2S)-2-acetolactate + NADPH + H(+). It carries out the reaction (2R,3R)-2,3-dihydroxy-3-methylpentanoate + NADP(+) = (S)-2-ethyl-2-hydroxy-3-oxobutanoate + NADPH + H(+). It functions in the pathway amino-acid biosynthesis; L-isoleucine biosynthesis; L-isoleucine from 2-oxobutanoate: step 2/4. Its pathway is amino-acid biosynthesis; L-valine biosynthesis; L-valine from pyruvate: step 2/4. Its function is as follows. Involved in the biosynthesis of branched-chain amino acids (BCAA). Catalyzes an alkyl-migration followed by a ketol-acid reduction of (S)-2-acetolactate (S2AL) to yield (R)-2,3-dihydroxy-isovalerate. In the isomerase reaction, S2AL is rearranged via a Mg-dependent methyl migration to produce 3-hydroxy-3-methyl-2-ketobutyrate (HMKB). In the reductase reaction, this 2-ketoacid undergoes a metal-dependent reduction by NADPH to yield (R)-2,3-dihydroxy-isovalerate. This is Ketol-acid reductoisomerase (NADP(+)) from Methylobacterium sp. (strain 4-46).